The chain runs to 240 residues: 3-deoxy-D-manno-octulosonic acid kinase (240 aa).

Residue Asp-170 is part of the active site.

Belongs to the protein kinase superfamily. KdkA/RfaP family.

Its subcellular location is the cell inner membrane. It carries out the reaction an alpha-Kdo-(2-&gt;6)-lipid IVA + ATP = a 4-O-phospho-alpha-Kdo-(2-&gt;6)-lipid IVA + ADP + H(+). The protein operates within bacterial outer membrane biogenesis; LPS core biosynthesis. In terms of biological role, catalyzes the ATP-dependent phosphorylation of the 3-deoxy-D-manno-octulosonic acid (Kdo) residue in Kdo-lipid IV(A) at the 4-OH position. The sequence is that of 3-deoxy-D-manno-octulosonic acid kinase from Mannheimia succiniciproducens (strain KCTC 0769BP / MBEL55E).